The chain runs to 137 residues: Large ribosomal subunit protein uL16 (137 aa).

A disordered region spans residues 1-20 (MLQPSNRKYRKDFKGRNRGV). Positions 7 to 17 (RKYRKDFKGRN) are enriched in basic residues.

Belongs to the universal ribosomal protein uL16 family. As to quaternary structure, part of the 50S ribosomal subunit.

Binds 23S rRNA and is also seen to make contacts with the A and possibly P site tRNAs. The chain is Large ribosomal subunit protein uL16 from Coxiella burnetii (strain CbuG_Q212) (Coxiella burnetii (strain Q212)).